Consider the following 60-residue polypeptide: Rubredoxin 4 (60 aa).

Positions 4–55 constitute a Rubredoxin-like domain; that stretch reads YKLYQCAQCGFEYDEAVGWPEDGIEPGTRWDDIPEDWSCPDCGAAKSDFFMV. Fe cation-binding residues include C9, C12, C42, and C45.

Belongs to the rubredoxin family. It depends on Fe(3+) as a cofactor.

Its function is as follows. Involved in the hydrocarbon hydroxylating system, which transfers electrons from NADH to rubredoxin reductase and then through rubredoxin to alkane 1 monooxygenase. This Rhodococcus sp. (strain Q15) protein is Rubredoxin 4 (rubA4).